Reading from the N-terminus, the 543-residue chain is Chaperonin GroEL 1 (543 aa).

ATP is bound by residues 30-33 (TLGP), Lys-51, 87-91 (DGTTT), Gly-415, and Asp-496.

Belongs to the chaperonin (HSP60) family. Forms a cylinder of 14 subunits composed of two heptameric rings stacked back-to-back. Interacts with the co-chaperonin GroES.

The protein localises to the cytoplasm. It carries out the reaction ATP + H2O + a folded polypeptide = ADP + phosphate + an unfolded polypeptide.. Its function is as follows. Together with its co-chaperonin GroES, plays an essential role in assisting protein folding. The GroEL-GroES system forms a nano-cage that allows encapsulation of the non-native substrate proteins and provides a physical environment optimized to promote and accelerate protein folding. The chain is Chaperonin GroEL 1 from Roseobacter denitrificans (strain ATCC 33942 / OCh 114) (Erythrobacter sp. (strain OCh 114)).